The primary structure comprises 493 residues: GTPase Der (493 aa).

Residues 3–166 (PVIALVGRPN…EALGIFPKDN (164 aa)) enclose the EngA-type G 1 domain. GTP-binding positions include 9 to 16 (GRPNVGKS), 56 to 60 (DTGGI), and 118 to 121 (NKVD). Residues 166 to 195 (NAEEEGEGEPASEEVAEGEEPTRIPGPSEK) form a disordered region. Acidic residues predominate over residues 167–184 (AEEEGEGEPASEEVAEGE). In terms of domain architecture, EngA-type G 2 spans 198-371 (IKIAIIGRPN…SVQESFRSAV (174 aa)). GTP is bound by residues 204 to 211 (GRPNVGKS), 251 to 255 (DTAGV), and 316 to 319 (NKWD). One can recognise a KH-like domain in the interval 372–456 (TRWPTSRLTS…PIRIEYKGGE (85 aa)). The span at 454–463 (GGENPYEGKK) shows a compositional bias: basic and acidic residues. The disordered stretch occupies residues 454–493 (GGENPYEGKKNSLTARQVNKKRRLMSHHKKAEKKKKDKRR). A compositionally biased stretch (basic residues) spans 471-493 (VNKKRRLMSHHKKAEKKKKDKRR).

It belongs to the TRAFAC class TrmE-Era-EngA-EngB-Septin-like GTPase superfamily. EngA (Der) GTPase family. As to quaternary structure, associates with the 50S ribosomal subunit.

Functionally, GTPase that plays an essential role in the late steps of ribosome biogenesis. The polypeptide is GTPase Der (Pseudomonas aeruginosa (strain ATCC 15692 / DSM 22644 / CIP 104116 / JCM 14847 / LMG 12228 / 1C / PRS 101 / PAO1)).